Consider the following 285-residue polypeptide: ATP synthase gamma chain (285 aa).

Belongs to the ATPase gamma chain family. As to quaternary structure, F-type ATPases have 2 components, CF(1) - the catalytic core - and CF(0) - the membrane proton channel. CF(1) has five subunits: alpha(3), beta(3), gamma(1), delta(1), epsilon(1). CF(0) has three main subunits: a, b and c.

It localises to the cell membrane. Functionally, produces ATP from ADP in the presence of a proton gradient across the membrane. The gamma chain is believed to be important in regulating ATPase activity and the flow of protons through the CF(0) complex. This chain is ATP synthase gamma chain, found in Clostridium novyi (strain NT).